We begin with the raw amino-acid sequence, 197 residues long: Phosphoheptose isomerase (197 aa).

The region spanning 34–196 (MVQCLLGGNK…DRTLFPQDEQ (163 aa)) is the SIS domain. Residue 49 to 51 (NGG) participates in substrate binding. The Zn(2+) site is built by His58 and Glu62. Substrate is bound by residues Glu62, 91-92 (ND), 117-119 (STS), Ser122, and Gln172. Zn(2+)-binding residues include Gln172 and His180.

It belongs to the SIS family. GmhA subfamily. As to quaternary structure, homotetramer. It depends on Zn(2+) as a cofactor.

It is found in the cytoplasm. It carries out the reaction 2 D-sedoheptulose 7-phosphate = D-glycero-alpha-D-manno-heptose 7-phosphate + D-glycero-beta-D-manno-heptose 7-phosphate. The protein operates within carbohydrate biosynthesis; D-glycero-D-manno-heptose 7-phosphate biosynthesis; D-glycero-alpha-D-manno-heptose 7-phosphate and D-glycero-beta-D-manno-heptose 7-phosphate from sedoheptulose 7-phosphate: step 1/1. In terms of biological role, catalyzes the isomerization of sedoheptulose 7-phosphate in D-glycero-D-manno-heptose 7-phosphate. The sequence is that of Phosphoheptose isomerase from Shewanella frigidimarina (strain NCIMB 400).